A 462-amino-acid polypeptide reads, in one-letter code: NEDD8-activating enzyme E1 catalytic subunit (462 aa).

The residue at position 2 (Ala2) is an N-acetylalanine. Residues 53 to 70 (HPDFEPSTESLQFLLDTC) form an interaction with UBE2M N-terminus region. ATP contacts are provided by residues 100 to 124 (DMDT…GRPK) and 148 to 171 (IQDF…SIIA). Interaction with UBE2M N-terminus stretches follow at residues 157–161 (RQFHI) and 192–217 (PSSI…LPGM). Positions 227–229 (LYP) are interaction with NEDD8. The active-site Glycyl thioester intermediate is Cys237. Interaction with NAE1 regions lie at residues 242-248 (MPRLPEH) and 292-295 (YNIR). The interaction with UBE2M N-terminus stretch occupies residues 331-338 (IATSAYIP). The interaction with NEDD8 stretch occupies residues 352-357 (YTYTFE). The interaction with UBE2M core domain stretch occupies residues 368–462 (SQLPQNIQFS…QTVLFKLHFT (95 aa)).

The protein belongs to the ubiquitin-activating E1 family. UBA3 subfamily. As to quaternary structure, heterodimer of UBA3 and NAE1. Interacts with NEDD8, UBE2F and UBE2M. Binds ESR1 and ESR2 with bound steroid ligand. Interacts with TBATA.

It catalyses the reaction ATP + [NEDD8 protein] + [E1 NEDD8-activating enzyme]-L-cysteine = AMP + diphosphate + [E1 NEDD8-activating enzyme]-S-[NEDD8 protein]-yl-L-cysteine.. It functions in the pathway protein modification; protein neddylation. Binding of TP53BP2 to the regulatory subunit NAE1 decreases activity. Catalytic subunit of the dimeric UBA3-NAE1 E1 enzyme. E1 activates NEDD8 by first adenylating its C-terminal glycine residue with ATP, thereafter linking this residue to the side chain of the catalytic cysteine, yielding a NEDD8-UBA3 thioester and free AMP. E1 finally transfers NEDD8 to the catalytic cysteine of UBE2M. Down-regulates steroid receptor activity. Necessary for cell cycle progression. This Mus musculus (Mouse) protein is NEDD8-activating enzyme E1 catalytic subunit (Uba3).